The following is a 378-amino-acid chain: Merozoite surface protein P41 (378 aa).

The signal sequence occupies residues Met-1–Ser-20. One can recognise a 6-Cys 1 domain in the interval Lys-21–Asp-133. Disulfide bonds link Cys-25–Cys-42, Cys-56–Cys-113, and Cys-64–Cys-111. Residues Asn-77, Asn-149, Asn-182, and Asn-205 are each glycosylated (N-linked (GlcNAc...) asparagine). The 135-residue stretch at Val-241 to Phe-375 folds into the 6-Cys 2 domain. 3 disulfide bridges follow: Cys-245–Cys-270, Cys-284–Cys-348, and Cys-297–Cys-346. Asn-351 is a glycosylation site (N-linked (GlcNAc...) asparagine).

In terms of assembly, heterodimer; heterodimerizes with PF12. May form an antiparallel heterodimer with PF12. In terms of processing, processed into a soluble form.

The protein resides in the cell surface. Its subcellular location is the cell membrane. This chain is Merozoite surface protein P41 (PF41), found in Plasmodium falciparum (isolate 3D7).